The sequence spans 89 residues: Small ribosomal subunit protein uS14 (89 aa).

The protein belongs to the universal ribosomal protein uS14 family. Part of the 30S ribosomal subunit. Contacts proteins S3 and S10.

Functionally, binds 16S rRNA, required for the assembly of 30S particles and may also be responsible for determining the conformation of the 16S rRNA at the A site. This Chlorobium chlorochromatii (strain CaD3) protein is Small ribosomal subunit protein uS14.